The following is a 213-amino-acid chain: Protein DMP3 (213 aa).

Residues 1-27 are disordered; it reads MSSPSSLTQRNPTSSQEQSESVPQLRR. Transmembrane regions (helical) follow at residues 45–65, 74–94, 136–156, and 176–196; these read LANL…PVFT, TQVL…LSSF, IRII…AVAL, and VLDI…LVFP.

The protein belongs to the plant DMP1 protein family. As to expression, expressed in leaves, siliques and roots (e.g. root hairs).

The protein localises to the endoplasmic reticulum membrane. Functionally, involved in membrane remodeling. In Arabidopsis thaliana (Mouse-ear cress), this protein is Protein DMP3.